Here is a 427-residue protein sequence, read N- to C-terminus: Transcobalamin-2 (427 aa).

Positions 1-18 are cleaved as a signal peptide; it reads MELLKALLLLSGVLGALA. 3 cysteine pairs are disulfide-bonded: Cys21-Cys268, Cys116-Cys310, and Cys165-Cys208. Cob(II)alamin-binding positions include 152 to 156, His193, 193 to 197, Asn245, Ser248, Gln292, and 395 to 397; these read TSYYQ, HLSVD, and WQL.

This sequence belongs to the eukaryotic cobalamin transport proteins family. In terms of assembly, interacts with CD320 (via LDL-receptor class A domains).

The protein resides in the secreted. Its function is as follows. Primary vitamin B12-binding and transport protein. Delivers cobalamin to cells. The polypeptide is Transcobalamin-2 (Tcn2) (Rattus norvegicus (Rat)).